Reading from the N-terminus, the 301-residue chain is Enolase-phosphatase E1 (301 aa).

Aspartate 22 and glutamate 24 together coordinate Mg(2+). Residues 163–164 (SS) and lysine 197 contribute to the substrate site. Aspartate 222 lines the Mg(2+) pocket. The interval 273–301 (AQAGDTEAKRSASGDGALAAKKAPPTHDF) is disordered.

Belongs to the HAD-like hydrolase superfamily. MasA/MtnC family. As to quaternary structure, monomer. Mg(2+) serves as cofactor.

It localises to the cytoplasm. It is found in the nucleus. The catalysed reaction is 5-methylsulfanyl-2,3-dioxopentyl phosphate + H2O = 1,2-dihydroxy-5-(methylsulfanyl)pent-1-en-3-one + phosphate. It functions in the pathway amino-acid biosynthesis; L-methionine biosynthesis via salvage pathway; L-methionine from S-methyl-5-thio-alpha-D-ribose 1-phosphate: step 3/6. The protein operates within amino-acid biosynthesis; L-methionine biosynthesis via salvage pathway; L-methionine from S-methyl-5-thio-alpha-D-ribose 1-phosphate: step 4/6. Bifunctional enzyme that catalyzes the enolization of 2,3-diketo-5-methylthiopentyl-1-phosphate (DK-MTP-1-P) into the intermediate 2-hydroxy-3-keto-5-methylthiopentenyl-1-phosphate (HK-MTPenyl-1-P), which is then dephosphorylated to form the acireductone 1,2-dihydroxy-3-keto-5-methylthiopentene (DHK-MTPene). The chain is Enolase-phosphatase E1 from Monosiga brevicollis (Choanoflagellate).